We begin with the raw amino-acid sequence, 197 residues long: 3-isopropylmalate dehydratase small subunit (197 aa).

The protein belongs to the LeuD family. LeuD type 1 subfamily. In terms of assembly, heterodimer of LeuC and LeuD.

The enzyme catalyses (2R,3S)-3-isopropylmalate = (2S)-2-isopropylmalate. Its pathway is amino-acid biosynthesis; L-leucine biosynthesis; L-leucine from 3-methyl-2-oxobutanoate: step 2/4. Its function is as follows. Catalyzes the isomerization between 2-isopropylmalate and 3-isopropylmalate, via the formation of 2-isopropylmaleate. The polypeptide is 3-isopropylmalate dehydratase small subunit (Mycolicibacterium vanbaalenii (strain DSM 7251 / JCM 13017 / BCRC 16820 / KCTC 9966 / NRRL B-24157 / PYR-1) (Mycobacterium vanbaalenii)).